A 466-amino-acid polypeptide reads, in one-letter code: Asparagine--tRNA ligase (466 aa).

It belongs to the class-II aminoacyl-tRNA synthetase family. As to quaternary structure, homodimer.

The protein localises to the cytoplasm. It catalyses the reaction tRNA(Asn) + L-asparagine + ATP = L-asparaginyl-tRNA(Asn) + AMP + diphosphate + H(+). The polypeptide is Asparagine--tRNA ligase (Shewanella sp. (strain MR-4)).